The primary structure comprises 222 residues: Thiamine-phosphate synthase (222 aa).

4-amino-2-methyl-5-(diphosphooxymethyl)pyrimidine contacts are provided by residues 44 to 48 and Asn-79; that span reads QFREK. Positions 80 and 99 each coordinate Mg(2+). Residue Ser-117 participates in 4-amino-2-methyl-5-(diphosphooxymethyl)pyrimidine binding. 143–145 is a binding site for 2-[(2R,5Z)-2-carboxy-4-methylthiazol-5(2H)-ylidene]ethyl phosphate; it reads TET. A 4-amino-2-methyl-5-(diphosphooxymethyl)pyrimidine-binding site is contributed by Lys-146. 2-[(2R,5Z)-2-carboxy-4-methylthiazol-5(2H)-ylidene]ethyl phosphate-binding positions include Gly-175 and 195-196; that span reads IS.

The protein belongs to the thiamine-phosphate synthase family. In terms of assembly, monomer. Mg(2+) is required as a cofactor.

It catalyses the reaction 2-[(2R,5Z)-2-carboxy-4-methylthiazol-5(2H)-ylidene]ethyl phosphate + 4-amino-2-methyl-5-(diphosphooxymethyl)pyrimidine + 2 H(+) = thiamine phosphate + CO2 + diphosphate. The enzyme catalyses 2-(2-carboxy-4-methylthiazol-5-yl)ethyl phosphate + 4-amino-2-methyl-5-(diphosphooxymethyl)pyrimidine + 2 H(+) = thiamine phosphate + CO2 + diphosphate. The catalysed reaction is 4-methyl-5-(2-phosphooxyethyl)-thiazole + 4-amino-2-methyl-5-(diphosphooxymethyl)pyrimidine + H(+) = thiamine phosphate + diphosphate. The protein operates within cofactor biosynthesis; thiamine diphosphate biosynthesis; thiamine phosphate from 4-amino-2-methyl-5-diphosphomethylpyrimidine and 4-methyl-5-(2-phosphoethyl)-thiazole: step 1/1. Its function is as follows. Condenses 4-methyl-5-(beta-hydroxyethyl)thiazole monophosphate (THZ-P) and 2-methyl-4-amino-5-hydroxymethyl pyrimidine pyrophosphate (HMP-PP) to form thiamine monophosphate (TMP). Is also able to use the 2-methoxy analog MeO-HMP-PP, as substrate in vitro, but not the 2-trifluoromethyl analog CF(3)-HMP-PP. In Bacillus subtilis (strain 168), this protein is Thiamine-phosphate synthase (thiE).